The following is a 246-amino-acid chain: 1-(5-phosphoribosyl)-5-[(5-phosphoribosylamino)methylideneamino] imidazole-4-carboxamide isomerase (246 aa).

Asp-8 serves as the catalytic Proton acceptor. Asp-131 (proton donor) is an active-site residue.

The protein belongs to the HisA/HisF family.

It localises to the cytoplasm. It catalyses the reaction 1-(5-phospho-beta-D-ribosyl)-5-[(5-phospho-beta-D-ribosylamino)methylideneamino]imidazole-4-carboxamide = 5-[(5-phospho-1-deoxy-D-ribulos-1-ylimino)methylamino]-1-(5-phospho-beta-D-ribosyl)imidazole-4-carboxamide. Its pathway is amino-acid biosynthesis; L-histidine biosynthesis; L-histidine from 5-phospho-alpha-D-ribose 1-diphosphate: step 4/9. The chain is 1-(5-phosphoribosyl)-5-[(5-phosphoribosylamino)methylideneamino] imidazole-4-carboxamide isomerase from Lactococcus lactis subsp. cremoris (strain SK11).